A 280-amino-acid polypeptide reads, in one-letter code: LLGVFHHTDLRKSLTVDEGTMKVEVLPALTDNYMYLVIDDETKEAAIVDPVQPQKVVEEAKKHGVMLTTVLTTHHHWDHAGGNEKLVKLEPGLKVYGGDDRIGGLTHKGTHLSTLQVGSLNVKCLSTPCHTSGHICYFVTKPGGSQPPAVFTGDTLFVAGCGKFYEGTADEMCKALLEVLGRFPPDTRVYCGHEYTINNLKFARHVESGNAAVQEKLAWAKEKYSIGEPAVPSTLAEEFTYNPFMRVREKTVQQHAGETDPVPTMRAVRREKDQFKVPRD.

An N6-acetyllysine modification is found at K61. Zn(2+) is bound by residues H74, H76, D78, and H79. At K88 the chain carries N6-acetyllysine. Zn(2+) is bound by residues H130 and D154. Residues 163-165 (KFY) and 193-195 (HEY) each bind substrate. Residue H193 participates in Zn(2+) binding. K201 carries the N6-acetyllysine; alternate modification. K201 carries the post-translational modification N6-succinyllysine; alternate. 269–272 (RREK) is a binding site for substrate.

The protein belongs to the metallo-beta-lactamase superfamily. Glyoxalase II family. As to quaternary structure, monomer. Requires Zn(2+) as cofactor. As to expression, testis.

The protein localises to the mitochondrion matrix. The protein resides in the cytoplasm. It carries out the reaction an S-(2-hydroxyacyl)glutathione + H2O = a 2-hydroxy carboxylate + glutathione + H(+). The catalysed reaction is (R)-S-lactoylglutathione + H2O = (R)-lactate + glutathione + H(+). Its pathway is secondary metabolite metabolism; methylglyoxal degradation; (R)-lactate from methylglyoxal: step 2/2. Functionally, thiolesterase that catalyzes the hydrolysis of S-D-lactoyl-glutathione to form glutathione and D-lactic acid. The protein is Hydroxyacylglutathione hydrolase, mitochondrial (HAGH) of Callithrix jacchus (White-tufted-ear marmoset).